Reading from the N-terminus, the 387-residue chain is Ubiquitin-conjugating enzyme E2 25 (387 aa).

Residues 117-164 form a disordered region; that stretch reads APPVRDDIDEGRGSDISDTTSEPIDDDMAGDGEVDDDDEEEEDDEDAD. A compositionally biased stretch (basic and acidic residues) spans 120-131; sequence VRDDIDEGRGSD. The span at 139-164 shows a compositional bias: acidic residues; it reads PIDDDMAGDGEVDDDDEEEEDDEDAD. The UBC core domain maps to 214–380; the sequence is TATDRLMKEI…QQIHAKSGWY (167 aa). Residue C315 is the Glycyl thioester intermediate of the active site.

The protein belongs to the ubiquitin-conjugating enzyme family. As to expression, in the embryo, expressed in precursor neuron and muscle cells and in other cells such as hypodermal cells. After hatching of L1 larvae and in all subsequent stages, strongest expression in pharyngeal muscle and anal muscle cells. In L4 larvae and adolescent hermaphrodites, also expressed in the vulval muscles. Expression also detected in all four nerve cords and in neurons with weaker levels in all body wall muscles.

The protein localises to the cytoplasm. It localises to the nucleus. The catalysed reaction is S-ubiquitinyl-[E1 ubiquitin-activating enzyme]-L-cysteine + [E2 ubiquitin-conjugating enzyme]-L-cysteine = [E1 ubiquitin-activating enzyme]-L-cysteine + S-ubiquitinyl-[E2 ubiquitin-conjugating enzyme]-L-cysteine.. Its pathway is protein modification; protein ubiquitination. Its function is as follows. Catalyzes the covalent attachment of ubiquitin to other proteins (Potential). Required for the maintenance of neuromuscular function. This is Ubiquitin-conjugating enzyme E2 25 from Caenorhabditis elegans.